The sequence spans 884 residues: Protein translocase subunit SecA (884 aa).

ATP is bound by residues Q82, 100-104 (GEGKT), and D491.

Belongs to the SecA family.

It localises to the plastid. The protein resides in the chloroplast stroma. It is found in the chloroplast thylakoid membrane. It catalyses the reaction ATP + H2O + cellular proteinSide 1 = ADP + phosphate + cellular proteinSide 2.. Functionally, has a central role in coupling the hydrolysis of ATP to the transfer of proteins across the thylakoid membrane. This is Protein translocase subunit SecA from Olisthodiscus luteus (Marine phytoflagellate).